The primary structure comprises 421 residues: Lipid II:glycine glycyltransferase (421 aa).

The protein belongs to the FemABX family. As to quaternary structure, monomer.

The protein localises to the cytoplasm. It carries out the reaction beta-D-GlcNAc-(1-&gt;4)-Mur2Ac(oyl-L-Ala-D-isoglutaminyl-L-Lys-D-Ala-D-Ala)-di-trans,octa-cis-undecaprenyl diphosphate + glycyl-tRNA(Gly) = beta-D-GlcNAc-(1-&gt;4)-Mur2Ac(oyl-L-Ala-D-isoglutaminyl-L-Lys-(N(6)-Gly)-D-Ala-D-Ala)-di-trans,octa-cis-undecaprenyl diphosphate + tRNA(Gly) + H(+). Its function is as follows. Catalyzes the incorporation of the first glycine of the pentaglycine interpeptide bridge, which is characteristic of the S.aureus peptidoglycan. This glycine is added to the epsilon-amino group of the L-lysine of the membrane-bound lipid II intermediate (GlcNAc-(beta-1,4)-N-acetylmuramic acid(-L-Ala-D-iGln-L-Lys-D-Ala-D-Ala)-pyrophosphoryl-undecaprenol), using glycyl-tRNA(Gly) as donor, in a ribosome-independent mechanism. Involved in methicillin resistance. This is Lipid II:glycine glycyltransferase (femX) from Staphylococcus aureus (strain USA300).